A 695-amino-acid polypeptide reads, in one-letter code: Amphiphysin (695 aa).

Coiled coils occupy residues 10-83 (AKNV…SLHE) and 144-191 (DYDS…QEEL). Residues 24-240 (VLQKLGKADE…MTKLGDQHAD (217 aa)) form the BAR domain. Disordered regions lie at residues 244–312 (TIQG…VTPT) and 486–617 (GAPG…EASQ). Residue Ser252 is modified to Phosphoserine. The residue at position 260 (Thr260) is a Phosphothreonine. Positions 261-274 (PSPPEEPSPLPSPT) are enriched in pro residues. A phosphoserine mark is found at Ser262, Ser268, Ser272, and Ser276. Thr280 is modified (phosphothreonine). Phosphoserine occurs at positions 506 and 638. The SH3 domain maps to 622-695 (GFLYKVETLH…FPENFTRRLD (74 aa)).

Heterodimer with BIN1. Binds SH3GLB1. Interacts with REPS1 and SGIP1. Binds AP2A2. Interacts with AP2B1. Interacts with DNM1 and SYNJ1. Neurons, certain endocrine cell types and spermatocytes.

The protein localises to the cytoplasmic vesicle. It localises to the secretory vesicle. Its subcellular location is the synaptic vesicle membrane. It is found in the cytoplasm. The protein resides in the cytoskeleton. Its function is as follows. May participate in mechanisms of regulated exocytosis in synapses and certain endocrine cell types. May control the properties of the membrane associated cytoskeleton. This is Amphiphysin (AMPH) from Homo sapiens (Human).